A 1465-amino-acid chain; its full sequence is DNA polymerase III PolC-type (1465 aa).

The region spanning 427-583 (YVVFDVETTG…YDAEATGRLL (157 aa)) is the Exonuclease domain.

It belongs to the DNA polymerase type-C family. PolC subfamily.

The protein resides in the cytoplasm. It carries out the reaction DNA(n) + a 2'-deoxyribonucleoside 5'-triphosphate = DNA(n+1) + diphosphate. Required for replicative DNA synthesis. This DNA polymerase also exhibits 3' to 5' exonuclease activity. This is DNA polymerase III PolC-type from Streptococcus pyogenes serotype M12 (strain MGAS2096).